The following is a 454-amino-acid chain: Histidine--tRNA ligase (454 aa).

It belongs to the class-II aminoacyl-tRNA synthetase family. As to quaternary structure, homodimer.

The protein resides in the cytoplasm. It carries out the reaction tRNA(His) + L-histidine + ATP = L-histidyl-tRNA(His) + AMP + diphosphate + H(+). This Phocaeicola vulgatus (strain ATCC 8482 / DSM 1447 / JCM 5826 / CCUG 4940 / NBRC 14291 / NCTC 11154) (Bacteroides vulgatus) protein is Histidine--tRNA ligase.